The following is a 221-amino-acid chain: F-box protein At1g55000 (221 aa).

Residues 7–46 (DTLIIIFQKLTVADLARASCVCKVWNSVATEDDLVVSAFT) form the F-box domain. Residues 74–118 (ISHRICRGDSVTSLAVKYAVQVMDIKRLNNMMSDHGIYSRDRLLI) enclose the LysM domain.

In terms of assembly, part of a SCF (ASK-cullin-F-box) protein ligase complex. Interacts with SKP1A/ASK1, SKP1B/ASK2, ASK4, ASK11 and ASK13.

Its pathway is protein modification; protein ubiquitination. Its function is as follows. Component of SCF(ASK-cullin-F-box) E3 ubiquitin ligase complexes, which may mediate the ubiquitination and subsequent proteasomal degradation of target proteins. This Arabidopsis thaliana (Mouse-ear cress) protein is F-box protein At1g55000.